A 299-amino-acid polypeptide reads, in one-letter code: AT-hook motif nuclear-localized protein 25 (299 aa).

Disordered regions lie at residues 1–87 (MSSY…RDSP) and 216–251 (EEETPPPRTTGVQQQQPEASQSSEVTGSGAQACESN). Basic and acidic residues-rich tracts occupy residues 14–23 (HLQRPEDSRT) and 33–42 (NRSEADEAKA). Composition is skewed to low complexity over residues 44-72 (TTPTGGATSSATASGSSSGRRPRGRPAGS) and 224-239 (TTGVQQQQPEASQSSE). Residues 63 to 75 (RRPRGRPAGSKNK) constitute a DNA-binding region (a.T hook). Residues 87–233 (PNVLRSHVLE…TTGVQQQQPE (147 aa)) enclose the PPC domain. Over residues 240–251 (VTGSGAQACESN) the composition is skewed to polar residues.

As to quaternary structure, homodimer. Interacts with AHL27 and AHL29. Expressed in seedlings, leaves, stems, floral tips and flowers.

The protein resides in the nucleus. Functionally, transcription factor that specifically binds AT-rich DNA sequences related to the nuclear matrix attachment regions (MARs). Binds the DNA sequence GNFEI (GA-negative feedback element I) in the GA3OX1 promoter. Binding to GNFEI sequence is required for GA-negative feedback regulation of GA3OX1. The polypeptide is AT-hook motif nuclear-localized protein 25 (Arabidopsis thaliana (Mouse-ear cress)).